A 379-amino-acid polypeptide reads, in one-letter code: Putative cysteine desulfurase IscS 1 (379 aa).

Pyridoxal 5'-phosphate contacts are provided by residues 71 to 72 (GT), Asn-151, Gln-179, and 199 to 201 (SGH). Lys-202 carries the post-translational modification N6-(pyridoxal phosphate)lysine. Residue Thr-237 participates in pyridoxal 5'-phosphate binding. Cys-325 serves as the catalytic Cysteine persulfide intermediate. Cys-325 contacts [2Fe-2S] cluster.

The protein belongs to the class-V pyridoxal-phosphate-dependent aminotransferase family. NifS/IscS subfamily. Requires pyridoxal 5'-phosphate as cofactor.

The catalysed reaction is (sulfur carrier)-H + L-cysteine = (sulfur carrier)-SH + L-alanine. Functionally, catalyzes the removal of elemental sulfur from cysteine to produce alanine. The chain is Putative cysteine desulfurase IscS 1 (iscS1) from Bacillus subtilis (strain 168).